Here is a 269-residue protein sequence, read N- to C-terminus: Aquaporin-1 (269 aa).

Residues 1-11 (MASEIKKKLFW) are Cytoplasmic-facing. The helical transmembrane segment at 12–29 (RAVVAEFLAMTLFVFISI) threads the bilayer. The Extracellular segment spans residues 30–46 (GSALGFNYPLERNQTLV). Asn42 carries an N-linked (GlcNAc...) asparagine glycan. Residues 47 to 65 (QDNVKVSLAFGLSIATLAQ) form a helical membrane-spanning segment. The Cytoplasmic portion of the chain corresponds to 66–68 (SVG). The stretch at 69–82 (HISGAHLNPAVTLG) is an intramembrane region. Residues 76-78 (NPA) carry the NPA 1 motif. Residues 83-90 (LLLSCQIS) lie on the Cytoplasmic side of the membrane. Residues 91 to 109 (ILRAVMYIIAQCVGAIVAS) form a helical membrane-spanning segment. Topologically, residues 110-133 (AILSGITSSLLENSLGRNDLARGV) are extracellular. The helical transmembrane segment at 134–153 (NSGQGLGIEIIGTLQLVLCV) threads the bilayer. Residues 154-163 (LATTDRRRRD) lie on the Cytoplasmic side of the membrane. Residues 164–181 (LGGSAPLAIGLSVALGHL) traverse the membrane as a helical segment. The Extracellular portion of the chain corresponds to 182–186 (LAIDY). Residues 187–199 (TGCGINPARSFGS) lie within the membrane without spanning it. The NPA 2 signature appears at 192-194 (NPA). The Extracellular portion of the chain corresponds to 200-206 (AVLTRNF). The N-linked (GlcNAc...) asparagine glycan is linked to Asn205. A helical transmembrane segment spans residues 207–224 (SNHWIFWVGPFIGSALAV). The Cytoplasmic portion of the chain corresponds to 225-269 (LIYDFILAPRSSDFTDRMKVWTSGQVEEYDLDADDINSRVEMKPK). Ser247 is modified (phosphoserine). Residue Tyr253 is modified to Phosphotyrosine. Ser262 is subject to Phosphoserine.

This sequence belongs to the MIP/aquaporin (TC 1.A.8) family. In terms of assembly, homotetramer; each monomer provides an independent water pore. Component of the ankyrin-1 complex in the erythrocyte, composed of ANK1, RHCE, RHAG, SLC4A1, EPB42, GYPA, GYPB and AQP1. Interacts with EPHB2; involved in endolymph production in the inner ear. Identified in a complex with STOM. Interacts (via the N-terminal) with ANK1 (via ANK 1-5 repeats). Interacts (via the C-terminal) with EPB42. In terms of tissue distribution, erythrocytes and renal tubules.

The protein resides in the cell membrane. The enzyme catalyses H2O(in) = H2O(out). It catalyses the reaction nitric oxide(out) = nitric oxide(in). The catalysed reaction is CO2(out) = CO2(in). It carries out the reaction glycerol(in) = glycerol(out). The enzyme catalyses H2O2(out) = H2O2(in). It catalyses the reaction K(+)(in) = K(+)(out). The catalysed reaction is Na(+)(in) = Na(+)(out). Forms a water channel that facilitates the transport of water across cell membranes, playing a crucial role in water homeostasis in various tissues. Could also be permeable to small solutes including hydrogen peroxide, glycerol and gases such as amonnia (NH3), nitric oxide (NO) and carbon dioxide (CO2). Recruited to the ankyrin-1 complex, a multiprotein complex of the erythrocyte membrane, it could be part of a CO2 metabolon, linking facilitated diffusion of CO2 across the membrane, anion exchange of Cl(-)/HCO3(-) and interconversion of dissolved CO2 and carbonic acid in the cytosol. In vitro, it shows non-selective gated cation channel activity and may be permeable to cations like K(+) and Na(+) in vivo. The protein is Aquaporin-1 of Rattus norvegicus (Rat).